Consider the following 422-residue polypeptide: Glutamate-1-semialdehyde 2,1-aminomutase (422 aa).

Lys265 is modified (N6-(pyridoxal phosphate)lysine).

Belongs to the class-III pyridoxal-phosphate-dependent aminotransferase family. HemL subfamily. It depends on pyridoxal 5'-phosphate as a cofactor.

The protein resides in the cytoplasm. The catalysed reaction is (S)-4-amino-5-oxopentanoate = 5-aminolevulinate. It functions in the pathway porphyrin-containing compound metabolism; protoporphyrin-IX biosynthesis; 5-aminolevulinate from L-glutamyl-tRNA(Glu): step 2/2. In Methanococcoides burtonii (strain DSM 6242 / NBRC 107633 / OCM 468 / ACE-M), this protein is Glutamate-1-semialdehyde 2,1-aminomutase.